A 617-amino-acid chain; its full sequence is Chaperone protein HscA homolog (617 aa).

This sequence belongs to the heat shock protein 70 family.

Its function is as follows. Chaperone involved in the maturation of iron-sulfur cluster-containing proteins. Has a low intrinsic ATPase activity which is markedly stimulated by HscB. This is Chaperone protein HscA homolog from Actinobacillus pleuropneumoniae serotype 5b (strain L20).